Consider the following 410-residue polypeptide: Multifunctional CCA protein (410 aa).

Residues Gly-8 and Arg-11 each contribute to the ATP site. Gly-8 and Arg-11 together coordinate CTP. Positions 21 and 23 each coordinate Mg(2+). ATP contacts are provided by Arg-91, Arg-138, and Arg-141. CTP contacts are provided by Arg-91, Arg-138, and Arg-141. In terms of domain architecture, HD spans 229 to 347 (TGIHQEMVSD…AQLALVCEAD (119 aa)).

It belongs to the tRNA nucleotidyltransferase/poly(A) polymerase family. Bacterial CCA-adding enzyme type 1 subfamily. In terms of assembly, monomer. Can also form homodimers and oligomers. It depends on Mg(2+) as a cofactor. Requires Ni(2+) as cofactor.

It carries out the reaction a tRNA precursor + 2 CTP + ATP = a tRNA with a 3' CCA end + 3 diphosphate. The catalysed reaction is a tRNA with a 3' CCA end + 2 CTP + ATP = a tRNA with a 3' CCACCA end + 3 diphosphate. In terms of biological role, catalyzes the addition and repair of the essential 3'-terminal CCA sequence in tRNAs without using a nucleic acid template. Adds these three nucleotides in the order of C, C, and A to the tRNA nucleotide-73, using CTP and ATP as substrates and producing inorganic pyrophosphate. tRNA 3'-terminal CCA addition is required both for tRNA processing and repair. Also involved in tRNA surveillance by mediating tandem CCA addition to generate a CCACCA at the 3' terminus of unstable tRNAs. While stable tRNAs receive only 3'-terminal CCA, unstable tRNAs are marked with CCACCA and rapidly degraded. This chain is Multifunctional CCA protein, found in Xanthomonas euvesicatoria pv. vesicatoria (strain 85-10) (Xanthomonas campestris pv. vesicatoria).